The primary structure comprises 423 residues: D-tagatose-1,6-bisphosphate aldolase subunit GatZ (423 aa).

The protein belongs to the GatZ/KbaZ family. GatZ subfamily. Forms a complex with GatY.

It functions in the pathway carbohydrate metabolism; D-tagatose 6-phosphate degradation; D-glyceraldehyde 3-phosphate and glycerone phosphate from D-tagatose 6-phosphate: step 2/2. In terms of biological role, component of the tagatose-1,6-bisphosphate aldolase GatYZ that is required for full activity and stability of the Y subunit. Could have a chaperone-like function for the proper and stable folding of GatY. When expressed alone, GatZ does not show any aldolase activity. Is involved in the catabolism of galactitol. This chain is D-tagatose-1,6-bisphosphate aldolase subunit GatZ, found in Salmonella gallinarum (strain 287/91 / NCTC 13346).